The following is a 417-amino-acid chain: Tryptophan synthase beta chain (417 aa).

Lysine 99 carries the post-translational modification N6-(pyridoxal phosphate)lysine.

It belongs to the TrpB family. As to quaternary structure, tetramer of two alpha and two beta chains. Pyridoxal 5'-phosphate serves as cofactor.

The catalysed reaction is (1S,2R)-1-C-(indol-3-yl)glycerol 3-phosphate + L-serine = D-glyceraldehyde 3-phosphate + L-tryptophan + H2O. It participates in amino-acid biosynthesis; L-tryptophan biosynthesis; L-tryptophan from chorismate: step 5/5. The beta subunit is responsible for the synthesis of L-tryptophan from indole and L-serine. The polypeptide is Tryptophan synthase beta chain (Corynebacterium glutamicum (strain R)).